A 236-amino-acid chain; its full sequence is N-acetyl-alpha-D-glucosaminyl L-malate deacetylase 1 (236 aa).

The Zn(2+) site is built by H12, D15, and H113.

The protein belongs to the PIGL family. It depends on Zn(2+) as a cofactor.

It carries out the reaction (S)-malyl N-acetyl-alpha-D-glucosaminide + H2O = (S)-malyl alpha-D-glucosaminide + acetate. In terms of biological role, involved in bacillithiol (BSH) biosynthesis. Catalyzes the second step of the pathway, the deacetylation of N-acetylglucosaminylmalate (GlcNAc-Mal) to glucosamine malate (GlcN-Mal). This is N-acetyl-alpha-D-glucosaminyl L-malate deacetylase 1 from Bacillus subtilis (strain 168).